Here is a 545-residue protein sequence, read N- to C-terminus: MGAKLLQYDEEARKSILNGVNALADAVKVTLGPKGRNVIIDKSFGAPTVTKDGVTVAKEVELEDKFENMGAQMVREVASKTSDVAGDGTTTATILAQAIYREGAKTVAAGSNPMDVKRGIEKAVAAVVTELKNISKPTKDQKEIAQVGTISANNDETIGNIIAEAMGKVGKEGVITVEEAKGLETELEIVEGMQFDRGYLSPYFVTNPEKMEVSLEDALILIYEKKISGMKDLLPILEQIAKMGRPLLIIAEDIEGEALATLVVNKIRGTLHVAAVKAPGFGDRRKAMLEDIAILTGGTVISEDMGYKLENTRLEDLGRAKRIQIDKDNTTIIDGAGERAALEGRVKQIRAQIDETTSDYDREKLQERLAKLVGGVAVIKVGAATETEMKEKKARVEDALNATRAAVEEGIVPGGGVAYIRTLPILEALKLEGDEQVGVNIVRKALEEPLKMIAANAGMEGTIVVEKVKEQSGAFGFNARTEVYEDMIEAGVIDPTKVTRFALQNAASVASLMLTTQCMIAEKPEEKGAGMPGMPPGGGYPGMGM.

Residues 30-33 (TLGP), K51, 87-91 (DGTTT), G415, and D494 contribute to the ATP site. The segment at 526–545 (EKGAGMPGMPPGGGYPGMGM) is disordered. Over residues 536 to 545 (PGGGYPGMGM) the composition is skewed to gly residues.

The protein belongs to the chaperonin (HSP60) family. As to quaternary structure, forms a cylinder of 14 subunits composed of two heptameric rings stacked back-to-back. Interacts with the co-chaperonin GroES.

The protein resides in the cytoplasm. It catalyses the reaction ATP + H2O + a folded polypeptide = ADP + phosphate + an unfolded polypeptide.. Its function is as follows. Together with its co-chaperonin GroES, plays an essential role in assisting protein folding. The GroEL-GroES system forms a nano-cage that allows encapsulation of the non-native substrate proteins and provides a physical environment optimized to promote and accelerate protein folding. The protein is Chaperonin GroEL 2 of Syntrophus aciditrophicus (strain SB).